The sequence spans 84 residues: MAHKKGQGSTQNNRDSIGRRLGVKKFGGEFVRAGNIIIRQRGTATHAGNNVGMGKDHTIFALIDGFVKFERKDKNRKKVSVYPA.

This sequence belongs to the bacterial ribosomal protein bL27 family.

This chain is Large ribosomal subunit protein bL27, found in Campylobacter lari (strain RM2100 / D67 / ATCC BAA-1060).